We begin with the raw amino-acid sequence, 1205 residues long: Bromodomain and PHD finger-containing protein 3 (1205 aa).

Disordered regions lie at residues 1 to 27 and 75 to 121; these read MRKPRRKSRQNAEGRRSPSPYSLKCSP and NSNK…SFRM. At serine 17 the chain carries Phosphoserine. Over residues 75–84 the composition is skewed to polar residues; sequence NSNKENSEQP. A compositionally biased stretch (basic residues) spans 89–99; it reads KSKKPSSKGKK. A PHD-type 1 zinc finger spans residues 212–262; that stretch reads DAFCCVCLDDECHNSNVILFCDICNLAVHQECYGVPYIPEGQWLCRCCLQS. The C2HC pre-PHD-type zinc finger occupies 266 to 299; the sequence is PVDCILCPNKGGAFKQTSDGHWAHVVCAIWIPEV. A PHD-type 2 zinc finger spans residues 323–387; that stretch reads LTCYICKQKG…RKTAYCEAHS (65 aa). Residues 387-472 are disordered; it reads SPPGAATARR…AGQDTPSTLP (86 aa). Residues serine 400 and serine 403 each carry the phosphoserine modification. The span at 417–432 shows a compositional bias: acidic residues; the sequence is DGEEEEEEEVEEEEQE. The segment covering 444–456 has biased composition (basic residues); sequence VPKKSKMSLKQKI. Lysine 447, lysine 449, and lysine 671 each carry N6-acetyllysine. Residues 589 to 693 form the Bromo domain; the sequence is LELMPFNVLL…DLGGAILRHA (105 aa). Serine 713 and serine 740 each carry phosphoserine. The segment at 779–897 is disordered; sequence RQKLAQPPPP…LQLGNEPLQR (119 aa). The span at 817-827 shows a compositional bias: acidic residues; it reads LQEEPEDDGDR. The span at 839–851 shows a compositional bias: low complexity; it reads EPTGPAPSLSEQE. Phosphoserine is present on serine 900. Disordered stretches follow at residues 907–926 and 931–1015; these read LSLMAPDTPAGTPLSGVGRR and FKKA…SECS. Over residues 942-955 the composition is skewed to basic and acidic residues; sequence RSPDRVLENGEDHG. Phosphoserine is present on residues serine 962 and serine 965. The span at 980-991 shows a compositional bias: basic and acidic residues; the sequence is SCSESEGERSPQ. The PWWP domain occupies 1076–1159; sequence PLELVWAKCR…RDKVLPLGVE (84 aa).

Component of some HBO1 complex composed of KAT7/HBO1, MEAF6, ING4 or ING5, and BRPF3. Component of the MOZ/MORF complex composed at least of ING5, KAT6A, KAT6B, MEAF6 and one of BRPF1, BRD1/BRPF2 and BRPF3. Interacts with KAT7/HBO1; the interaction is direct.

Its subcellular location is the nucleus. Its function is as follows. Scaffold subunit of various histone acetyltransferase (HAT) complexes, such as the MOZ/MORF and HBO1 complexes, which have a histone H3 acetyltransferase activity. Plays a role in DNA replication initiation by directing KAT7/HBO1 specificity towards histone H3 'Lys-14' acetylation (H3K14ac), thereby facilitating the activation of replication origins. Component of the MOZ/MORF complex which has a histone H3 acetyltransferase activity. In Homo sapiens (Human), this protein is Bromodomain and PHD finger-containing protein 3.